The sequence spans 382 residues: MTPPATPLTPTLQLAHDLIRCRSVTPEDDGCQELMIRRLEAIGFKTERLRFGEVDNFWAIRGGDGPILAFAGHTDVVPTGPETHWNNPPFEPTIIDGMLHGRGAADMKGSLASMVVACENFVARHPNHKGRIAFLITSDEEGPSINGTVKVVEWLEARHTKMTWCIVGEPSSTTRVGDVIKNGRRGSLGGVLKVKGIQGHVAYPHLADNPIHTLAPALAELAAEHWDNGNEFFPATSFQVSNINGGTGATNVIPGEVTVVFNFRFSTELTDAILRERTQAILDKHELKYELEWILSGQPFLTPRGDLVNAVVDAINTATGLDAELSTSGGTSDGRFIAPTGAQVVELGPINATIHKVNECISAEDLNKLTAIYERTLEILLA.

His-73 is a binding site for Zn(2+). The active site involves Asp-75. Asp-106 lines the Zn(2+) pocket. Glu-140 (proton acceptor) is an active-site residue. 3 residues coordinate Zn(2+): Glu-141, Glu-169, and His-355.

The protein belongs to the peptidase M20A family. DapE subfamily. In terms of assembly, homodimer. Requires Zn(2+) as cofactor. Co(2+) serves as cofactor.

The catalysed reaction is N-succinyl-(2S,6S)-2,6-diaminopimelate + H2O = (2S,6S)-2,6-diaminopimelate + succinate. Its pathway is amino-acid biosynthesis; L-lysine biosynthesis via DAP pathway; LL-2,6-diaminopimelate from (S)-tetrahydrodipicolinate (succinylase route): step 3/3. Functionally, catalyzes the hydrolysis of N-succinyl-L,L-diaminopimelic acid (SDAP), forming succinate and LL-2,6-diaminopimelate (DAP), an intermediate involved in the bacterial biosynthesis of lysine and meso-diaminopimelic acid, an essential component of bacterial cell walls. The polypeptide is Succinyl-diaminopimelate desuccinylase (Cellvibrio japonicus (strain Ueda107) (Pseudomonas fluorescens subsp. cellulosa)).